The chain runs to 368 residues: F-box/kelch-repeat protein At5g51250 (368 aa).

The 44-residue stretch at 1–44 (MSSLPDDLLLSIFARISRLYYPTLSLVSKSFRSLLASPDLYKAR) folds into the F-box domain. 3 Kelch repeats span residues 116–163 (DIYN…VLDR), 165–218 (IYVA…CIDG), and 260–304 (LFYI…YGGK).

This Arabidopsis thaliana (Mouse-ear cress) protein is F-box/kelch-repeat protein At5g51250.